A 660-amino-acid chain; its full sequence is Methionine--tRNA ligase 1 (660 aa).

The short motif at 15-25 is the 'HIGH' region element; the sequence is YYPSGKLHIGH. Positions 310–314 match the 'KMSKS' region motif; sequence KMSKS. Lys313 contributes to the ATP binding site. One can recognise a tRNA-binding domain in the interval 560–660; sequence DFFKVELRVA…QNIPNGTKIK (101 aa).

Belongs to the class-I aminoacyl-tRNA synthetase family. MetG type 2B subfamily. In terms of assembly, homodimer.

The protein localises to the cytoplasm. It carries out the reaction tRNA(Met) + L-methionine + ATP = L-methionyl-tRNA(Met) + AMP + diphosphate. Functionally, is required not only for elongation of protein synthesis but also for the initiation of all mRNA translation through initiator tRNA(fMet) aminoacylation. The sequence is that of Methionine--tRNA ligase 1 from Bacillus anthracis.